Reading from the N-terminus, the 345-residue chain is Uroporphyrinogen decarboxylase (345 aa).

Residues 27 to 31, Asp77, Tyr152, Ser207, and His323 each bind substrate; that span reads RQAGR.

It belongs to the uroporphyrinogen decarboxylase family. As to quaternary structure, homodimer.

The protein localises to the cytoplasm. It catalyses the reaction uroporphyrinogen III + 4 H(+) = coproporphyrinogen III + 4 CO2. It functions in the pathway porphyrin-containing compound metabolism; protoporphyrin-IX biosynthesis; coproporphyrinogen-III from 5-aminolevulinate: step 4/4. In terms of biological role, catalyzes the decarboxylation of four acetate groups of uroporphyrinogen-III to yield coproporphyrinogen-III. The sequence is that of Uroporphyrinogen decarboxylase from Maricaulis maris (strain MCS10) (Caulobacter maris).